A 282-amino-acid chain; its full sequence is tRNA uridine(34) hydroxylase (282 aa).

The 95-residue stretch at 128 to 222 (EGRPVVMLDT…YFEEVGGSHY (95 aa)) folds into the Rhodanese domain. Residue Cys182 is the Cysteine persulfide intermediate of the active site.

The protein belongs to the TrhO family.

The enzyme catalyses uridine(34) in tRNA + AH2 + O2 = 5-hydroxyuridine(34) in tRNA + A + H2O. Its function is as follows. Catalyzes oxygen-dependent 5-hydroxyuridine (ho5U) modification at position 34 in tRNAs. This is tRNA uridine(34) hydroxylase from Cupriavidus necator (strain ATCC 17699 / DSM 428 / KCTC 22496 / NCIMB 10442 / H16 / Stanier 337) (Ralstonia eutropha).